A 178-amino-acid polypeptide reads, in one-letter code: Cytochrome b6-f complex iron-sulfur subunit (178 aa).

A helical transmembrane segment spans residues Leu-20 to Ile-42. Residues Ala-65 to Val-161 form the Rieske domain. Residues Cys-107, His-109, Cys-125, and His-128 each contribute to the [2Fe-2S] cluster site. Cys-112 and Cys-127 are oxidised to a cystine.

The protein belongs to the Rieske iron-sulfur protein family. The 4 large subunits of the cytochrome b6-f complex are cytochrome b6, subunit IV (17 kDa polypeptide, PetD), cytochrome f and the Rieske protein, while the 4 small subunits are PetG, PetL, PetM and PetN. The complex functions as a dimer. It depends on [2Fe-2S] cluster as a cofactor.

The protein localises to the cellular thylakoid membrane. It carries out the reaction 2 oxidized [plastocyanin] + a plastoquinol + 2 H(+)(in) = 2 reduced [plastocyanin] + a plastoquinone + 4 H(+)(out). Its function is as follows. Component of the cytochrome b6-f complex, which mediates electron transfer between photosystem II (PSII) and photosystem I (PSI), cyclic electron flow around PSI, and state transitions. The polypeptide is Cytochrome b6-f complex iron-sulfur subunit (Synechococcus sp. (strain CC9605)).